A 1253-amino-acid polypeptide reads, in one-letter code: Cytoplasmic FMR1-interacting protein 1 (1253 aa).

Residue serine 583 is modified to Phosphoserine. The interval 724-732 (DKRLRSECK) is EIF4E-binding. Residue threonine 1234 is modified to Phosphothreonine.

The protein belongs to the CYFIP family. As to quaternary structure, component of the WAVE1 complex composed of ABI2, CYFIP1 or CYFIP2, BRK1, NCKAP1 and WASF1/WAVE1. Within the complex, a heterodimer containing NCKAP1 and CYFIP1 interacts with a heterotrimer formed by WAVE1, ABI2 and BRK1. Component of the CYFIP1-EIF4E-FMR1 complex which is composed of CYFIP, EIF4E and FMR1. Interacts with FMR1 but does not bind to related proteins FXR1 or FXR2. Interaction with EIF4E stimulates FMR1 binding. Component of the WAVE2 complex composed of ABI1, CYFIP1/SRA1, NCKAP1/NAP1 (NCKAP1L/HEM1 in hematopoietic cells) and WASF2/WAVE2. Interacts with the active GTP-bound form of RAC1. Interacts through its C-terminus with the C-terminus of DPYSL2/CRMP2 which is necessary for DPYSL2-induced axon outgrowth. Interacts with NYAP1, NYAP2 and MYO16. Interacts with TMEM108 (via N-terminus); the interaction associates TMEM108 with the WAVE1 complex. Highly expressed in embryonic and adult developing nervous system.

It localises to the cytoplasm. The protein localises to the perinuclear region. It is found in the cell projection. The protein resides in the lamellipodium. Its subcellular location is the ruffle. It localises to the synapse. The protein localises to the synaptosome. Component of the CYFIP1-EIF4E-FMR1 complex which binds to the mRNA cap and mediates translational repression. In the CYFIP1-EIF4E-FMR1 complex this subunit is an adapter between EIF4E and FMR1. Promotes the translation repression activity of FMR1 in brain probably by mediating its association with EIF4E and mRNA. Regulates formation of membrane ruffles and lamellipodia. Plays a role in axon outgrowth. Binds to F-actin but not to RNA. Part of the WAVE complex that regulates actin filament reorganization via its interaction with the Arp2/3 complex. Actin remodeling activity is regulated by RAC1. Regulator of epithelial morphogenesis. May act as an invasion suppressor in cancers. As component of the WAVE1 complex, required for BDNF-NTRK2 endocytic trafficking and signaling from early endosomes. The chain is Cytoplasmic FMR1-interacting protein 1 from Mus musculus (Mouse).